Consider the following 609-residue polypeptide: UvrABC system protein C (609 aa).

The GIY-YIG domain occupies 13 to 91 (HEPGVYRMYD…IKLYQPRYNV (79 aa)). The 36-residue stretch at 201–236 (QQVLDYLIGKMEQASRNLDFEQAARYRDQIQAVRSV) folds into the UVR domain.

The protein belongs to the UvrC family. Interacts with UvrB in an incision complex.

It is found in the cytoplasm. Functionally, the UvrABC repair system catalyzes the recognition and processing of DNA lesions. UvrC both incises the 5' and 3' sides of the lesion. The N-terminal half is responsible for the 3' incision and the C-terminal half is responsible for the 5' incision. The protein is UvrABC system protein C of Haemophilus influenzae (strain 86-028NP).